The primary structure comprises 72 residues: Large ribosomal subunit protein uL29 (72 aa).

Belongs to the universal ribosomal protein uL29 family.

This chain is Large ribosomal subunit protein uL29, found in Caldicellulosiruptor saccharolyticus (strain ATCC 43494 / DSM 8903 / Tp8T 6331).